We begin with the raw amino-acid sequence, 862 residues long: DNA replication licensing factor MCM4 (862 aa).

Positions 1–12 are enriched in gly residues; the sequence is MASRGGGGGGDG. The tract at residues 1-132 is disordered; it reads MASRGGGGGG…GGGGGGAGAD (132 aa). Composition is skewed to low complexity over residues 20-41 and 52-64; these read SSPD…PQSG and SASP…SLGG. The C4-type zinc finger occupies 289–317; that stretch reads CLVCGFYSEPVMVDRGRVTEPHICQKEQC. One can recognise an MCM domain in the interval 453–659; it reads IYDRLTRSLA…QTDRRLAKHI (207 aa). 503 to 510 lines the ATP pocket; it reads GDPGTSKS. Positions 635-638 match the Arginine finger motif; sequence SRFD.

The protein belongs to the MCM family. As to quaternary structure, component of the minichromosome maintenance (MCM) complex, a heterotetramer composed of MCM2, MCM3, MCM4, MCM5, MCM6 and MCM7.

It is found in the nucleus. It carries out the reaction ATP + H2O = ADP + phosphate + H(+). Functionally, probable component of the MCM2-7 complex (MCM complex) that may function as a DNA helicase and which is essential to undergo a single round of replication initiation and elongation per cell cycle in eukaryotic cells. The protein is DNA replication licensing factor MCM4 (MCM4) of Oryza sativa subsp. japonica (Rice).